The following is a 380-amino-acid chain: MKVFKQQLEQLGAQNQYRSIPDLIHQGRYITRENRKMLNMSSNDYLGLASDENLRRSFLQQYGGNFPSFTSSSSRLLTGNFPIYTDLEELVAQRFQRESALLFNSGYHANLGILPALTTTKSLILADKFVHASMIDGIRLSRCAFFRYRHNDYEHLKNLLEKNVGKFDRTFIVTESVFSMDGDVADLKQLVQLKKQFPNTYLYVDEAHAIGVYGQNGLGIAERDNLIAEIDLLVGTFGKALASVGAYAVCNQVLKECLINQMRPLIFSTALPPFNVAWTYFIFERLPQFSKERSHLEQLSAFLRREVAHRTQIMPSQTCIVPYILGGNEATLAKAEYLQRQGYYCLPIRPSTVPKNTSRIRLSLTADMTTDEVRQFAACL.

Arg18 is a substrate binding site. A pyridoxal 5'-phosphate-binding site is contributed by 106-107 (GY). His131 is a substrate binding site. Pyridoxal 5'-phosphate contacts are provided by residues Ser179, 205 to 208 (DEAH), and 236 to 239 (TFGK). Residue Lys239 is modified to N6-(pyridoxal phosphate)lysine. A substrate-binding site is contributed by Thr352.

Belongs to the class-II pyridoxal-phosphate-dependent aminotransferase family. BioF subfamily. In terms of assembly, homodimer. It depends on pyridoxal 5'-phosphate as a cofactor.

It catalyses the reaction 6-carboxyhexanoyl-[ACP] + L-alanine + H(+) = (8S)-8-amino-7-oxononanoate + holo-[ACP] + CO2. It participates in cofactor biosynthesis; biotin biosynthesis. Functionally, catalyzes the decarboxylative condensation of pimeloyl-[acyl-carrier protein] and L-alanine to produce 8-amino-7-oxononanoate (AON), [acyl-carrier protein], and carbon dioxide. This chain is Putative 8-amino-7-oxononanoate synthase (bioF), found in Neisseria meningitidis serogroup B (strain ATCC BAA-335 / MC58).